The chain runs to 1155 residues: DNA-directed RNA polymerase subunit beta (1155 aa).

The protein belongs to the RNA polymerase beta chain family. In terms of assembly, the RNAP catalytic core consists of 2 alpha, 1 beta, 1 beta' and 1 omega subunit. When a sigma factor is associated with the core the holoenzyme is formed, which can initiate transcription.

It carries out the reaction RNA(n) + a ribonucleoside 5'-triphosphate = RNA(n+1) + diphosphate. DNA-dependent RNA polymerase catalyzes the transcription of DNA into RNA using the four ribonucleoside triphosphates as substrates. The chain is DNA-directed RNA polymerase subunit beta from Borrelia duttonii (strain Ly).